The sequence spans 154 residues: U1 small nuclear ribonucleoprotein C (154 aa).

Residues 4-36 (YYCDYCDTYLTHDSPSVRKTHCTGRKHKDNVKF) form a Matrin-type zinc finger.

This sequence belongs to the U1 small nuclear ribonucleoprotein C family. As to quaternary structure, U1 snRNP is composed of the 7 core Sm proteins B/B', D1, D2, D3, E, F and G that assemble in a heptameric protein ring on the Sm site of the small nuclear RNA to form the core snRNP, and at least 3 U1 snRNP-specific proteins U1-70K, U1-A and U1-C. U1-C interacts with U1 snRNA and the 5' splice-site region of the pre-mRNA.

It localises to the nucleus. Functionally, component of the spliceosomal U1 snRNP, which is essential for recognition of the pre-mRNA 5' splice-site and the subsequent assembly of the spliceosome. U1-C is directly involved in initial 5' splice-site recognition for both constitutive and regulated alternative splicing. The interaction with the 5' splice-site seems to precede base-pairing between the pre-mRNA and the U1 snRNA. Stimulates commitment or early (E) complex formation by stabilizing the base pairing of the 5' end of the U1 snRNA and the 5' splice-site region. This chain is U1 small nuclear ribonucleoprotein C, found in Aedes aegypti (Yellowfever mosquito).